Here is a 314-residue protein sequence, read N- to C-terminus: MEKVFSDEEISGNHHWSVNGMTSLNRSASEWAFNRFIQESSAAADDGESTTACGVSVSSPPNVPVDSEEYRAFLKSKLNLACAAVAMKRGTFIKPQDTSGRSDNGGANESEQASLASSKATPMMSSAITSGSELSGDEEEADGETNMNPTNVKRVKRMLSNRESARRSRRRKQAHLSELETQVSQLRVENSKLMKGLTDVTQTFNDASVENRVLKANIETLRAKVKMAEETVKRLTGFNPMFHNMPQIVSTVSLPSETSNSPDTTSSQVTTPEIISSGNKGKALIGCKMNRTASMRRVESLEHLQKRIRSVGDQ.

Serine 29 is subject to Phosphoserine; by KIN10. The disordered stretch occupies residues 94-177 (KPQDTSGRSD…SRRRKQAHLS (84 aa)). Over residues 96-133 (QDTSGRSDNGGANESEQASLASSKATPMMSSAITSGSE) the composition is skewed to polar residues. Positions 151–214 (NVKRVKRMLS…NDASVENRVL (64 aa)) constitute a bZIP domain. The interval 153 to 172 (KRVKRMLSNRESARRSRRRK) is basic motif. Residues 155–162 (VKRMLSNR) carry the Nuclear localization signal 1 motif. The tract at residues 179 to 193 (LETQVSQLRVENSKL) is leucine-zipper. Residues 253-274 (SLPSETSNSPDTTSSQVTTPEI) form a disordered region. Serine 294 and serine 300 each carry phosphoserine; by KIN10. The short motif at 295–302 (MRRVESLE) is the Nuclear localization signal 2 element.

It belongs to the bZIP family. In terms of assembly, homodimer. Forms a heterodimer with LSD1, BZIP1, BZIP2, BZIP9, BZIP10, BZIP11, BZIP25, BZIP44 and BZIP53. Interacts with KIN10 and SNF4. Component of a ternary complex composed of BZIP2-BZIP63 heterodimer and KIN10. Post-translationally, phosphorylated. The phosphorylation at Ser-29, Ser-294 and Ser-300 by KIN10 strongly enhances its ability to form homo- as well as heterodimers and are then essential for its transcriptional activity. In terms of tissue distribution, expressed in roots, shoots, young leaves, pollen, and flowers.

It is found in the nucleus. Its activity is regulated as follows. Up-regulated by KIN10 under a phosphorylation-dependent manner. Its function is as follows. Transcription factor involved in controlling responses to starvation. BZIP2-BZIP63-KIN10 complex binds to the ETFQO promoter to up-regulate its transcription. This Arabidopsis thaliana (Mouse-ear cress) protein is Basic leucine zipper 63 (BZIP63).